The following is a 135-amino-acid chain: Large ribosomal subunit protein bL12c (135 aa).

The protein belongs to the bacterial ribosomal protein bL12 family. Homodimer. Part of the ribosomal stalk of the 50S ribosomal subunit. Forms a multimeric L10(L12)X complex, where L10 forms an elongated spine to which 2 to 4 L12 dimers bind in a sequential fashion. Binds GTP-bound translation factors.

Its subcellular location is the plastid. The protein resides in the chloroplast. In terms of biological role, forms part of the ribosomal stalk which helps the ribosome interact with GTP-bound translation factors. Is thus essential for accurate translation. In Chara vulgaris (Common stonewort), this protein is Large ribosomal subunit protein bL12c.